The primary structure comprises 82 residues: RNA-binding protein Hfq (82 aa).

One can recognise a Sm domain in the interval 9 to 68 (DPYLNTLRKERVPVSIYLVNGIKLQGQIESFDQFVILLKNTVSQMVYKHAISTVVPSRPV).

The protein belongs to the Hfq family. In terms of assembly, homohexamer.

Functionally, RNA chaperone that binds small regulatory RNA (sRNAs) and mRNAs to facilitate mRNA translational regulation in response to envelope stress, environmental stress and changes in metabolite concentrations. Also binds with high specificity to tRNAs. In Pseudomonas aeruginosa (strain LESB58), this protein is RNA-binding protein Hfq.